Here is a 404-residue protein sequence, read N- to C-terminus: Argininosuccinate synthase (404 aa).

ATP is bound by residues 10–18 (AYSGGVDTS) and A38. Position 89 (Y89) interacts with L-citrulline. G119 contacts ATP. L-aspartate-binding residues include T121, N125, and D126. Position 125 (N125) interacts with L-citrulline. L-citrulline-binding residues include R129, S177, S186, E262, and Y274.

Belongs to the argininosuccinate synthase family. Type 1 subfamily. As to quaternary structure, homotetramer.

The protein localises to the cytoplasm. The catalysed reaction is L-citrulline + L-aspartate + ATP = 2-(N(omega)-L-arginino)succinate + AMP + diphosphate + H(+). It functions in the pathway amino-acid biosynthesis; L-arginine biosynthesis; L-arginine from L-ornithine and carbamoyl phosphate: step 2/3. The chain is Argininosuccinate synthase from Prochlorococcus marinus (strain MIT 9515).